Here is a 354-residue protein sequence, read N- to C-terminus: Rhodopsin (354 aa).

Residues M1–A36 are Extracellular-facing. N-linked (GlcNAc...) asparagine glycosylation is found at N2 and N15. The chain crosses the membrane as a helical span at residues Y37–V61. Over T62–N73 the chain is Cytoplasmic. Residues Y74–Y96 traverse the membrane as a helical segment. Residues T97 to C110 are Extracellular-facing. Cysteines 110 and 187 form a disulfide. Residues N111–I133 traverse the membrane as a helical segment. A 'Ionic lock' involved in activated form stabilization motif is present at residues E134–W136. Topologically, residues E134–H152 are cytoplasmic. Residues A153–F173 traverse the membrane as a helical segment. Residues G174–S202 are Extracellular-facing. N200 carries N-linked (GlcNAc...) asparagine glycosylation. The helical transmembrane segment at F203–G224 threads the bilayer. Residues R225–R252 lie on the Cytoplasmic side of the membrane. Residues M253 to Y274 form a helical membrane-spanning segment. The Extracellular segment spans residues I275–L286. The chain crosses the membrane as a helical span at residues F287 to C308. N6-(retinylidene)lysine is present on K296. Residues M309–A354 are Cytoplasmic-facing. 2 S-palmitoyl cysteine lipidation sites follow: C322 and C323. The tract at residues E329–A354 is disordered. Positions A334 to A354 are enriched in low complexity.

Belongs to the G-protein coupled receptor 1 family. Opsin subfamily. Phosphorylated on some or all of the serine and threonine residues present in the C-terminal region. Post-translationally, contains one covalently linked retinal chromophore.

It is found in the membrane. It localises to the cell projection. Its subcellular location is the cilium. The protein resides in the photoreceptor outer segment. Its function is as follows. Photoreceptor required for image-forming vision at low light intensity. While most salt water fish species use retinal as chromophore, most freshwater fish use 3-dehydroretinal, or a mixture of retinal and 3-dehydroretinal. Light-induced isomerization of 11-cis to all-trans retinal triggers a conformational change that activates signaling via G-proteins. Subsequent receptor phosphorylation mediates displacement of the bound G-protein alpha subunit by arrestin and terminates signaling. In Atherina boyeri (Big-scale sand smelt), this protein is Rhodopsin (rho).